A 272-amino-acid chain; its full sequence is Cytochrome b-c1 complex subunit Rieske, mitochondrial (272 aa).

Residues 77-104 (VHNDVTVPDFSAYRREDVMDATTSSQTS) lie on the Mitochondrial matrix side of the membrane. The chain crosses the membrane as a helical span at residues 105-138 (SEDRKGFSYLVTATACVATAYAAKNVVTQFISSL). The Mitochondrial intermembrane segment spans residues 139–272 (SASADVLALS…FVGDDLVVVG (134 aa)). The 86-residue stretch at 185–270 (EAEVDVSKLR…YQFVGDDLVV (86 aa)) folds into the Rieske domain. Residues C215, H217, L218, C234, H237, and S239 each contribute to the [2Fe-2S] cluster site. Residues C220 and C236 are joined by a disulfide bond.

It belongs to the Rieske iron-sulfur protein family. Component of the ubiquinol-cytochrome c oxidoreductase (cytochrome b-c1 complex, complex III, CIII), a multisubunit enzyme composed of 11 subunits. The complex is composed of 3 respiratory subunits cytochrome b, cytochrome c1 and Rieske protein UQCRFS1, 2 core protein subunits UQCRC1/QCR1 and UQCRC2/QCR2, and 6 low-molecular weight protein subunits UQCRH/QCR6, UQCRB/QCR7, UQCRQ/QCR8, UQCR10/QCR9, UQCR11/QCR10 and subunit 9, the cleavage product of Rieske protein UQCRFS1. The complex exists as an obligatory dimer and forms supercomplexes (SCs) in the inner mitochondrial membrane with NADH-ubiquinone oxidoreductase (complex I, CI) and cytochrome c oxidase (complex IV, CIV), resulting in different assemblies (supercomplex SCI(1)III(2)IV(1) and megacomplex MCI(2)III(2)IV(2)). Incorporation of the Rieske protein UQCRFS1 is the penultimate step in complex III assembly. Interacts with TTC19, which is involved in the clearance of UQCRFS1 fragments. As to quaternary structure, component of the ubiquinol-cytochrome c oxidoreductase (cytochrome b-c1 complex, complex III, CIII). Subunit 9 corresponds to the mitochondrial targeting sequence (MTS) of Rieske protein UQCRFS1. It is retained after processing and incorporated inside complex III, where it remains bound to the complex and localizes between the 2 core subunits UQCRC1/QCR1 and UQCRC2/QCR2. The cofactor is [2Fe-2S] cluster. Post-translationally, proteolytic processing is necessary for the correct insertion of UQCRFS1 in the complex III dimer. Several fragments are generated during UQCRFS1 insertion, most probably due to the endogenous matrix-processing peptidase (MPP) activity of the 2 core protein subunits UQCRC1/QCR1 and UQCRC2/QCR2, which are homologous to the 2 mitochondrial-processing peptidase (MPP) subunits beta-MPP and alpha-MPP respectively. The action of the protease is also necessary for the clearance of the UQCRFS1 fragments.

The protein localises to the mitochondrion inner membrane. It carries out the reaction a quinol + 2 Fe(III)-[cytochrome c](out) = a quinone + 2 Fe(II)-[cytochrome c](out) + 2 H(+)(out). Its function is as follows. Component of the ubiquinol-cytochrome c oxidoreductase, a multisubunit transmembrane complex that is part of the mitochondrial electron transport chain which drives oxidative phosphorylation. The respiratory chain contains 3 multisubunit complexes succinate dehydrogenase (complex II, CII), ubiquinol-cytochrome c oxidoreductase (cytochrome b-c1 complex, complex III, CIII) and cytochrome c oxidase (complex IV, CIV), that cooperate to transfer electrons derived from NADH and succinate to molecular oxygen, creating an electrochemical gradient over the inner membrane that drives transmembrane transport and the ATP synthase. The cytochrome b-c1 complex catalyzes electron transfer from ubiquinol to cytochrome c, linking this redox reaction to translocation of protons across the mitochondrial inner membrane, with protons being carried across the membrane as hydrogens on the quinol. In the process called Q cycle, 2 protons are consumed from the matrix, 4 protons are released into the intermembrane space and 2 electrons are passed to cytochrome c. The Rieske protein is a catalytic core subunit containing a [2Fe-2S] iron-sulfur cluster. It cycles between 2 conformational states during catalysis to transfer electrons from the quinol bound in the Q(0) site in cytochrome b to cytochrome c1. Incorporation of UQCRFS1 is the penultimate step in complex III assembly. Component of the ubiquinol-cytochrome c oxidoreductase (cytochrome b-c1 complex, complex III, CIII). UQCRFS1 undergoes proteolytic processing once it is incorporated in the complex III dimer. One of the fragments, called subunit 9, corresponds to its mitochondrial targeting sequence (MTS). The proteolytic processing is necessary for the correct insertion of UQCRFS1 in the complex III dimer, but the persistence of UQCRFS1-derived fragments may prevent newly imported UQCRFS1 to be processed and assembled into complex III and is detrimental for the complex III structure and function. The protein is Cytochrome b-c1 complex subunit Rieske, mitochondrial (UQCRFS1) of Gallus gallus (Chicken).